Here is a 434-residue protein sequence, read N- to C-terminus: Trigger factor (434 aa).

In terms of domain architecture, PPIase FKBP-type spans 160–245 (GDKVKMNFVG…LTEVQAANLP (86 aa)).

The protein belongs to the FKBP-type PPIase family. Tig subfamily.

The protein resides in the cytoplasm. The catalysed reaction is [protein]-peptidylproline (omega=180) = [protein]-peptidylproline (omega=0). Involved in protein export. Acts as a chaperone by maintaining the newly synthesized protein in an open conformation. Functions as a peptidyl-prolyl cis-trans isomerase. This chain is Trigger factor, found in Shewanella sp. (strain W3-18-1).